Reading from the N-terminus, the 336-residue chain is N-acetylornithine carbamoyltransferase (336 aa).

Carbamoyl phosphate is bound by residues 49–52 (SMRT), Trp-77, and Arg-112. Glu-144 lines the N(2)-acetyl-L-ornithine pocket. 148–151 (HPCQ) is a carbamoyl phosphate binding site. Lys-252 and Leu-295 together coordinate N(2)-acetyl-L-ornithine. Carbamoyl phosphate is bound at residue 294-295 (CL). The residue at position 302 (Lys-302) is an N6-carboxylysine. Carbamoyl phosphate is bound at residue Arg-322.

Belongs to the aspartate/ornithine carbamoyltransferase superfamily. AOTCase family. As to quaternary structure, homotrimer.

The protein localises to the cytoplasm. The enzyme catalyses N(2)-acetyl-L-ornithine + carbamoyl phosphate = N(2)-acetyl-L-citrulline + phosphate + H(+). It participates in amino-acid biosynthesis; L-arginine biosynthesis. With respect to regulation, carboxylation at Lys-302 increases the catalytic activity of the enzyme. In terms of biological role, catalyzes the transfer of the carbamoyl group from carbamoyl phosphate to the delta-amino group of N(2)-acetyl-L-ornithine to produce N(2)-acetyl-L-citrulline. This is a step in an alternative arginine biosynthesis pathway. The enzyme has no activity with ornithine. This Xylella fastidiosa (strain Temecula1 / ATCC 700964) protein is N-acetylornithine carbamoyltransferase.